Here is a 650-residue protein sequence, read N- to C-terminus: Macrolide export ATP-binding/permease protein MacB (650 aa).

The region spanning 5-243 is the ABC transporter domain; the sequence is LELKDIRRSY…AGGTEPVVNT (239 aa). 41–48 contacts ATP; it reads GASGSGKS. The next 5 helical transmembrane spans lie at 273–293, 523–543, 554–574, 580–600, and 613–633; these read LLTM…VVVG, LFLT…VMNI, ANDI…HLFF, VLPA…AFTL, and PLAL…FGWL.

Belongs to the ABC transporter superfamily. Macrolide exporter (TC 3.A.1.122) family. As to quaternary structure, homodimer. Part of the tripartite efflux system MacAB-TolC, which is composed of an inner membrane transporter, MacB, a periplasmic membrane fusion protein, MacA, and an outer membrane component, TolC. The complex forms a large protein conduit and can translocate molecules across both the inner and outer membranes. Interacts with MacA.

Its subcellular location is the cell inner membrane. In terms of biological role, part of the tripartite efflux system MacAB-TolC. MacB is a non-canonical ABC transporter that contains transmembrane domains (TMD), which form a pore in the inner membrane, and an ATP-binding domain (NBD), which is responsible for energy generation. Confers resistance against macrolides. This Shigella dysenteriae serotype 1 (strain Sd197) protein is Macrolide export ATP-binding/permease protein MacB.